A 361-amino-acid chain; its full sequence is Phosphoserine aminotransferase (361 aa).

Arg-42 is an L-glutamate binding site. Pyridoxal 5'-phosphate is bound by residues 76 to 77, Trp-102, Thr-152, Asp-172, and Gln-195; that span reads AT. Lys-196 bears the N6-(pyridoxal phosphate)lysine mark. 237–238 serves as a coordination point for pyridoxal 5'-phosphate; it reads NT.

It belongs to the class-V pyridoxal-phosphate-dependent aminotransferase family. SerC subfamily. Homodimer. The cofactor is pyridoxal 5'-phosphate.

It localises to the cytoplasm. It catalyses the reaction O-phospho-L-serine + 2-oxoglutarate = 3-phosphooxypyruvate + L-glutamate. It carries out the reaction 4-(phosphooxy)-L-threonine + 2-oxoglutarate = (R)-3-hydroxy-2-oxo-4-phosphooxybutanoate + L-glutamate. It functions in the pathway amino-acid biosynthesis; L-serine biosynthesis; L-serine from 3-phospho-D-glycerate: step 2/3. Its pathway is cofactor biosynthesis; pyridoxine 5'-phosphate biosynthesis; pyridoxine 5'-phosphate from D-erythrose 4-phosphate: step 3/5. Functionally, catalyzes the reversible conversion of 3-phosphohydroxypyruvate to phosphoserine and of 3-hydroxy-2-oxo-4-phosphonooxybutanoate to phosphohydroxythreonine. This is Phosphoserine aminotransferase from Stenotrophomonas maltophilia (strain K279a).